The following is a 451-amino-acid chain: MDPHGTCGGSNVPAFLAKLWTLVEDPDTDPLICWSPEGNSFHVFDQGQFAKEVLPKYFKHNNMASFVRQLNMYGFRKVVHIEQGGLVKPERDDTEFQHPYFIRGQEQLLENIKRKVNTMSATKSDEVKVRQDSVGKLISDVQSMKGKQESIDGRLLSMKHENEALWREVASLRQKHTQQQKVVNKLIQFLVSLVQSNRILGVKRKIPLMLNDSSTGHSPPKYSRQYSLEHVPSSTSYPVSGFTDSSAGPIISDVTELPESSPSPSPCPSLEASPSPVILIKTEPLTPSQSPEQSPAPPKLDDTPISPSTFIDSILLETETSVCPGGNKNDEMSESHPPEPCLSVACLDNISLSRQMSEVSRLFPTSCSSVPGRAEPPGLDMAVAELNDHVDNIDFNLDTLQNLLNGQSFSVDTSALMDLFSPSLGIPDLSLPDPDSSLASVSSTPIYTCVV.

The DNA-binding element occupies 12-117 (VPAFLAKLWT…LLENIKRKVN (106 aa)). 2 disordered regions span residues 210-273 (LNDS…LEAS) and 285-307 (LTPSQSPEQSPAPPKLDDTPISP). Over residues 232-246 (PSSTSYPVSGFTDSS) the composition is skewed to polar residues.

Belongs to the HSF family. In terms of assembly, homotrimer. In terms of processing, exhibits temperature-dependent phosphorylation.

The protein localises to the nucleus. In terms of biological role, DNA-binding protein that specifically binds heat shock promoter elements (HSE) and activates transcription. This is Heat shock factor protein (hsf1) from Xenopus laevis (African clawed frog).